The sequence spans 335 residues: MHSNPFLTQFILEEQRSIPSATGDFTGLLNDIVTACKTISHLVNRGGLIDILGAAGTENIQGEGQKKLDVISNDIMVNSLEWTGHLGAMASEEIEGIIPIPGQYPKGKYLLLFDPLDGSSNIDINISVGTIFSILRCPDDVSEPTQEDFLQPGTQQVCAGFCVYGPTTMMVLTAGHGVNGFTLDQDIGEFILTHPNMTIPEDTMEFAINMSNQRFWAAPVQRYIEDCLQGKEGCRNKNFNMRWVASMVSEVYRILTRGGIFMYPWDSRDPDKPGRLRLMYEANPMSFIVEQAGGVSSTGDQRILEINPEGIHQRVPVILGSKNEVERVIAYHQEA.

The Mg(2+) site is built by glutamate 92, aspartate 114, leucine 116, and aspartate 117. Residues 117 to 120 (DGSS) and asparagine 209 contribute to the substrate site. Glutamate 281 serves as a coordination point for Mg(2+).

It belongs to the FBPase class 1 family. In terms of assembly, homotetramer. Mg(2+) is required as a cofactor.

It localises to the cytoplasm. It catalyses the reaction beta-D-fructose 1,6-bisphosphate + H2O = beta-D-fructose 6-phosphate + phosphate. It participates in carbohydrate biosynthesis; gluconeogenesis. In Nitrosococcus oceani (strain ATCC 19707 / BCRC 17464 / JCM 30415 / NCIMB 11848 / C-107), this protein is Fructose-1,6-bisphosphatase class 1.